Consider the following 184-residue polypeptide: Peptide deformylase (184 aa).

Cys-98 and His-140 together coordinate Fe cation. Residue Glu-141 is part of the active site. His-144 is a binding site for Fe cation.

Belongs to the polypeptide deformylase family. The cofactor is Fe(2+).

The enzyme catalyses N-terminal N-formyl-L-methionyl-[peptide] + H2O = N-terminal L-methionyl-[peptide] + formate. Removes the formyl group from the N-terminal Met of newly synthesized proteins. Requires at least a dipeptide for an efficient rate of reaction. N-terminal L-methionine is a prerequisite for activity but the enzyme has broad specificity at other positions. The chain is Peptide deformylase from Bacteroides thetaiotaomicron (strain ATCC 29148 / DSM 2079 / JCM 5827 / CCUG 10774 / NCTC 10582 / VPI-5482 / E50).